The sequence spans 614 residues: UvrABC system protein C (614 aa).

One can recognise a GIY-YIG domain in the interval 14–91; sequence TSPGCYIHKD…IKENKPKYNI (78 aa). The UVR domain maps to 196-231; that stretch reads DKIIDDLKSKMAVAAQSMEFERAAEYRDLIQAIGTL. The segment at 595 to 614 is disordered; sequence LSQVAEERVDYQTEGNHNEP. Over residues 599-614 the composition is skewed to basic and acidic residues; that stretch reads AEERVDYQTEGNHNEP.

Belongs to the UvrC family. Interacts with UvrB in an incision complex.

The protein localises to the cytoplasm. Its function is as follows. The UvrABC repair system catalyzes the recognition and processing of DNA lesions. UvrC both incises the 5' and 3' sides of the lesion. The N-terminal half is responsible for the 3' incision and the C-terminal half is responsible for the 5' incision. This is UvrABC system protein C from Streptococcus pneumoniae serotype 2 (strain D39 / NCTC 7466).